We begin with the raw amino-acid sequence, 202 residues long: Small ribosomal subunit protein uS4c (202 aa).

The S4 RNA-binding domain occupies 90-153; the sequence is MRLDNIIFRL…KSQAIISKNL (64 aa).

It belongs to the universal ribosomal protein uS4 family. As to quaternary structure, part of the 30S ribosomal subunit. Contacts protein S5. The interaction surface between S4 and S5 is involved in control of translational fidelity.

Its subcellular location is the plastid. It localises to the chloroplast. Its function is as follows. One of the primary rRNA binding proteins, it binds directly to 16S rRNA where it nucleates assembly of the body of the 30S subunit. In terms of biological role, with S5 and S12 plays an important role in translational accuracy. The polypeptide is Small ribosomal subunit protein uS4c (rps4) (Rosulabryum capillare (Capillary thread-moss)).